The chain runs to 497 residues: Probable malate:quinone oxidoreductase (497 aa).

This sequence belongs to the MQO family. FAD serves as cofactor.

The enzyme catalyses (S)-malate + a quinone = a quinol + oxaloacetate. It participates in carbohydrate metabolism; tricarboxylic acid cycle; oxaloacetate from (S)-malate (quinone route): step 1/1. This Rhodopseudomonas palustris (strain TIE-1) protein is Probable malate:quinone oxidoreductase.